The chain runs to 132 residues: Mercuric resistance operon regulatory protein (132 aa).

Residues 2-71 (KFRIGELADK…LNEIDKLLGV (70 aa)) enclose the HTH merR-type domain. A DNA-binding region (H-T-H motif) is located at residues 5 to 24 (IGELADKCGVNKETIRYYER). 3 residues coordinate Hg(2+): Cys-79, Cys-114, and Cys-123.

Homodimer.

In terms of biological role, mediates the mercuric-dependent induction of mercury resistance operon. In the absence of mercury MerR represses transcription by binding tightly to the mer operator region; when mercury is present the dimeric complex binds a single ion and becomes a potent transcriptional activator, while remaining bound to the mer site. The protein is Mercuric resistance operon regulatory protein (merR1) of Bacillus cereus.